The chain runs to 239 residues: Ribonuclease 3 (239 aa).

The 126-residue stretch at 12-137 (REKVEAVIGY…LIAAIYLDAG (126 aa)) folds into the RNase III domain. E50 is a Mg(2+) binding site. The active site involves D54. Mg(2+)-binding residues include D123 and E126. Residue E126 is part of the active site. Residues 162–231 (DAKTELQEWA…ATRLLEREGV (70 aa)) form the DRBM domain.

It belongs to the ribonuclease III family. Homodimer. Mg(2+) is required as a cofactor.

It is found in the cytoplasm. The catalysed reaction is Endonucleolytic cleavage to 5'-phosphomonoester.. Its function is as follows. Digests double-stranded RNA. Involved in the processing of primary rRNA transcript to yield the immediate precursors to the large and small rRNAs (23S and 16S). Processes some mRNAs, and tRNAs when they are encoded in the rRNA operon. Processes pre-crRNA and tracrRNA of type II CRISPR loci if present in the organism. This chain is Ribonuclease 3, found in Allorhizobium ampelinum (strain ATCC BAA-846 / DSM 112012 / S4) (Agrobacterium vitis (strain S4)).